The primary structure comprises 509 residues: Lysine--tRNA ligase (509 aa).

Glu395 and Glu402 together coordinate Mg(2+).

It belongs to the class-II aminoacyl-tRNA synthetase family. Homodimer. Mg(2+) is required as a cofactor.

It localises to the cytoplasm. The catalysed reaction is tRNA(Lys) + L-lysine + ATP = L-lysyl-tRNA(Lys) + AMP + diphosphate. This chain is Lysine--tRNA ligase, found in Fervidobacterium nodosum (strain ATCC 35602 / DSM 5306 / Rt17-B1).